We begin with the raw amino-acid sequence, 291 residues long: Urease accessory protein UreD (291 aa).

This sequence belongs to the UreD family. As to quaternary structure, ureD, UreF and UreG form a complex that acts as a GTP-hydrolysis-dependent molecular chaperone, activating the urease apoprotein by helping to assemble the nickel containing metallocenter of UreC. The UreE protein probably delivers the nickel.

The protein resides in the cytoplasm. Its function is as follows. Required for maturation of urease via the functional incorporation of the urease nickel metallocenter. The sequence is that of Urease accessory protein UreD from Polynucleobacter asymbioticus (strain DSM 18221 / CIP 109841 / QLW-P1DMWA-1) (Polynucleobacter necessarius subsp. asymbioticus).